The primary structure comprises 555 residues: Potassium-transporting ATPase potassium-binding subunit (555 aa).

10 helical membrane passes run 2-22, 60-80, 130-150, 173-193, 246-266, 278-298, 374-394, 412-432, 483-503, and 525-545; these read IWVAVVITMLLFILVAKPTGI, QYALSLVLLNGFMIVVVYFIF, IGITFLMFAAPATTLALVMAF, VFLPITFMAALVFVALGVPQT, MSNILQMMLMMLLPTALPFTY, ILFVSLFMVFLLGFITITTSE, AGFVNIIMYAIIAVFISGLMV, LIAVTILFHPLLILGFSALAL, LVMFLGRYFSLITMLAVAASL, and GIFIGTIVIVGALTFFPMLVL.

Belongs to the KdpA family. The system is composed of three essential subunits: KdpA, KdpB and KdpC.

The protein resides in the cell membrane. In terms of biological role, part of the high-affinity ATP-driven potassium transport (or Kdp) system, which catalyzes the hydrolysis of ATP coupled with the electrogenic transport of potassium into the cytoplasm. This subunit binds the extracellular potassium ions and delivers the ions to the membrane domain of KdpB through an intramembrane tunnel. The polypeptide is Potassium-transporting ATPase potassium-binding subunit (Bacillus cereus (strain AH187)).